Here is a 119-residue protein sequence, read N- to C-terminus: U-scoloptoxin(16)-Er11a (119 aa).

Positions 1 to 19 (MKSWTAAVLSLGLIYLSIS) are cleaved as a signal peptide.

The protein belongs to the scoloptoxin-16 family. Contains 4 disulfide bonds. As to expression, expressed by the venom gland.

The protein resides in the secreted. This Ethmostigmus rubripes (Giant centipede) protein is U-scoloptoxin(16)-Er11a.